We begin with the raw amino-acid sequence, 410 residues long: Imidazolonepropionase (410 aa).

Fe(3+) is bound by residues histidine 73 and histidine 75. Histidine 73 and histidine 75 together coordinate Zn(2+). Arginine 82, tyrosine 145, and histidine 178 together coordinate 4-imidazolone-5-propanoate. Residue tyrosine 145 participates in N-formimidoyl-L-glutamate binding. Histidine 243 is a Fe(3+) binding site. Histidine 243 contacts Zn(2+). Glutamine 246 is a binding site for 4-imidazolone-5-propanoate. Aspartate 318 is a binding site for Fe(3+). Aspartate 318 lines the Zn(2+) pocket. The N-formimidoyl-L-glutamate site is built by asparagine 320 and glycine 322. Serine 323 contributes to the 4-imidazolone-5-propanoate binding site.

This sequence belongs to the metallo-dependent hydrolases superfamily. HutI family. Requires Zn(2+) as cofactor. Fe(3+) is required as a cofactor.

Its subcellular location is the cytoplasm. It carries out the reaction 4-imidazolone-5-propanoate + H2O = N-formimidoyl-L-glutamate. Its pathway is amino-acid degradation; L-histidine degradation into L-glutamate; N-formimidoyl-L-glutamate from L-histidine: step 3/3. Its function is as follows. Catalyzes the hydrolytic cleavage of the carbon-nitrogen bond in imidazolone-5-propanoate to yield N-formimidoyl-L-glutamate. It is the third step in the universal histidine degradation pathway. In Shewanella frigidimarina (strain NCIMB 400), this protein is Imidazolonepropionase.